A 161-amino-acid polypeptide reads, in one-letter code: Nucleotide-binding protein Gmet_3206 (161 aa).

Belongs to the YajQ family.

Its function is as follows. Nucleotide-binding protein. In Geobacter metallireducens (strain ATCC 53774 / DSM 7210 / GS-15), this protein is Nucleotide-binding protein Gmet_3206.